Here is a 464-residue protein sequence, read N- to C-terminus: ATP-dependent protease ATPase subunit HslU (464 aa).

Residues Ile19, 61-66 (GVGKTE), Asp277, Glu342, and Arg414 each bind ATP.

This sequence belongs to the ClpX chaperone family. HslU subfamily. As to quaternary structure, a double ring-shaped homohexamer of HslV is capped on each side by a ring-shaped HslU homohexamer. The assembly of the HslU/HslV complex is dependent on binding of ATP.

Its subcellular location is the cytoplasm. ATPase subunit of a proteasome-like degradation complex; this subunit has chaperone activity. The binding of ATP and its subsequent hydrolysis by HslU are essential for unfolding of protein substrates subsequently hydrolyzed by HslV. HslU recognizes the N-terminal part of its protein substrates and unfolds these before they are guided to HslV for hydrolysis. This Lactobacillus johnsonii (strain CNCM I-12250 / La1 / NCC 533) protein is ATP-dependent protease ATPase subunit HslU.